Reading from the N-terminus, the 489-residue chain is 3-octaprenyl-4-hydroxybenzoate carboxy-lyase (489 aa).

Asn-172 is a binding site for Mn(2+). Prenylated FMN is bound by residues 175–177 (VYR), 189–191 (RWL), and 194–195 (RG). Residue Glu-240 participates in Mn(2+) binding. Residue Asp-288 is the Proton donor of the active site.

It belongs to the UbiD family. As to quaternary structure, homohexamer. The cofactor is prenylated FMN. It depends on Mn(2+) as a cofactor.

The protein localises to the cell membrane. It carries out the reaction a 4-hydroxy-3-(all-trans-polyprenyl)benzoate + H(+) = a 2-(all-trans-polyprenyl)phenol + CO2. The protein operates within cofactor biosynthesis; ubiquinone biosynthesis. Catalyzes the decarboxylation of 3-octaprenyl-4-hydroxy benzoate to 2-octaprenylphenol, an intermediate step in ubiquinone biosynthesis. This chain is 3-octaprenyl-4-hydroxybenzoate carboxy-lyase, found in Wigglesworthia glossinidia brevipalpis.